A 748-amino-acid polypeptide reads, in one-letter code: Antigen peptide transporter 1 (748 aa).

The Cytoplasmic segment spans residues 1–15; it reads MASSRCPAPRGCRCL. A helical transmembrane segment spans residues 16 to 36; sequence PGASLAWLGTVLLLLADWVLL. At 37 to 53 the chain is on the lumenal side; sequence RTALPRIFSLLVPTALP. The chain crosses the membrane as a helical span at residues 54–76; the sequence is LLRVWAVGLSRWAVLWLGACGVL. The Cytoplasmic segment spans residues 77–92; the sequence is RATVGSKSENAGAQGW. Residues 93–113 traverse the membrane as a helical segment; the sequence is LAALKPLAAALGLALPGLALF. Over 114–133 the chain is Lumenal; that stretch reads RELISWGAPGSADSTRLLHW. The chain crosses the membrane as a helical span at residues 134 to 154; the sequence is GSHPTAFVVSYAAALPAAALW. Residues 155–186 lie on the Cytoplasmic side of the membrane; sequence HKLGSLWVPGGQGGSGNPVRRLLGCLGSETRR. Residues 187–207 traverse the membrane as a helical segment; the sequence is LSLFLVLVVLSSLGEMAIPFF. One can recognise an ABC transmembrane type-1 domain in the interval 187-470; that stretch reads LSLFLVLVVL…LLSIYPRVQK (284 aa). Residues 208–227 are Lumenal-facing; that stretch reads TGRLTDWILQDGSADTFTRN. Residues 228–248 form a helical membrane-spanning segment; sequence LTLMSILTIASAVLEFVGDGI. Topologically, residues 249-298 are cytoplasmic; it reads YNNTMGHVHSHLQGEVFGAVLRQETEFFQQNQTGNIMSRVTEDTSTLSDS. Residues 299–319 form a helical membrane-spanning segment; sequence LSENLSLFLWYLVRGLCLLGI. Residues 320–328 are Lumenal-facing; that stretch reads MLWGSVSLT. Residues 329 to 349 traverse the membrane as a helical segment; that stretch reads MVTLITLPLLFLLPKKVGKWY. At 350 to 418 the chain is on the cytoplasmic side; sequence QLLEVQVRES…AVNSWTTSIS (69 aa). The tract at residues 375-420 is part of the peptide-binding site; that stretch reads PTVRSFANEEGEAQKFREKLQEIKTLNQKEAVAYAVNSWTTSISGM. A helical transmembrane segment spans residues 419-439; sequence GMLLKVGILYIGGQLVTSGAV. Over 440–443 the chain is Lumenal; that stretch reads SSGN. A helical membrane pass occupies residues 444–464; that stretch reads LVTFVLYQMQFTQAVEVLLSI. Residues 453–487 are part of the peptide-binding site; sequence QFTQAVEVLLSIYPRVQKAVGSSEKIFEYLDRTPR. Topologically, residues 465–748 are cytoplasmic; that stretch reads YPRVQKAVGS…MVQAPADAPE (284 aa). Residues 503–742 form the ABC transporter domain; that stretch reads VQFQDVSFAY…KGCYWAMVQA (240 aa). ATP contacts are provided by residues 538–546, 641–647, and Gln-701; these read GPNGSGKST and SQLSGGQ. Ser-545 contacts Mg(2+).

Belongs to the ABC transporter superfamily. ABCB family. MHC peptide exporter (TC 3.A.1.209) subfamily. As to quaternary structure, heterodimer of TAP1 and TAP2 (TAP1-TAP2). A component of the peptide loading complex (PLC), interacts via TAPBP with MHCI heterodimer; this interaction mediates peptide-MHCI assembly. Recruits TAPBP in a 1:1 stoichiometry. Interacts with classical MHCI such as HLA-A*02-B2M; this interaction is obligatory for the loading of peptide epitopes. Interacts with non-classical MHCI molecules including HLA-E-B2M and HLA-F-B2M as well as PLC component CALR before the peptide loading. Interacts with PSMB5 and PSMB8. (Microbial infection) Interacts with Epstein-Barr virus BNLF2a. In terms of assembly, (Microbial infection) Interacts with herpes simplex virus US12/ICP47. As to quaternary structure, (Microbial infection) Interacts with adenovirus E3-19K glycoprotein, which binds TAP1-TAP2 and acts as a TAPBP inhibitor, preventing TAP1-TAP2 association with MHCI. It depends on Mg(2+) as a cofactor. As to expression, highly expressed in professional APCs monocytes and dendritic cells as well as in lymphocyte subsets T cells, B cells and NK cells.

It localises to the endoplasmic reticulum membrane. The catalysed reaction is a peptide antigen(in) + ATP + H2O = a peptide antigen(out) + ADP + phosphate + H(+). Its activity is regulated as follows. Inhibited at high ER lumenal peptide concentrations. With respect to regulation, (Microbial infection) Inhibited by herpes simplex virus US12/ICP47 protein, which blocks the peptide-binding site of TAP1-TAP2. (Microbial infection) Inhibited by human cytomegalovirus US6 glycoprotein, which binds to the lumenal side of TAP1-TAP2 complex and inhibits peptide translocation by specifically blocking ATP-binding and preventing TAP1-TAP2 conformational rearrangement induced by peptide binding. ABC transporter associated with antigen processing. In complex with TAP2 mediates unidirectional translocation of peptide antigens from cytosol to endoplasmic reticulum (ER) for loading onto MHC class I (MHCI) molecules. Uses the chemical energy of ATP to export peptides against the concentration gradient. During the transport cycle alternates between 'inward-facing' state with peptide binding site facing the cytosol to 'outward-facing' state with peptide binding site facing the ER lumen. Peptide antigen binding to ATP-loaded TAP1-TAP2 induces a switch to hydrolysis-competent 'outward-facing' conformation ready for peptide loading onto nascent MHCI molecules. Subsequently ATP hydrolysis resets the transporter to the 'inward facing' state for a new cycle. Typically transports intracellular peptide antigens of 8 to 13 amino acids that arise from cytosolic proteolysis via IFNG-induced immunoproteasome. Binds peptides with free N- and C-termini, the first three and the C-terminal residues being critical. Preferentially selects peptides having a highly hydrophobic residue at position 3 and hydrophobic or charged residues at the C-terminal anchor. Proline at position 2 has the most destabilizing effect. As a component of the peptide loading complex (PLC), acts as a molecular scaffold essential for peptide-MHCI assembly and antigen presentation. The polypeptide is Antigen peptide transporter 1 (Homo sapiens (Human)).